A 393-amino-acid polypeptide reads, in one-letter code: Pyruvate dehydrogenase E1 component subunit alpha-2, mitochondrial (393 aa).

Residues 1-28 (MALSRLSSRSNTFLKPAITALPSSIRRH) constitute a mitochondrion transit peptide. Positions 94, 120, 121, 169, 171, 200, 201, 202, 229, and 231 each coordinate pyruvate. Tyr-120, Arg-121, Gly-169, Val-171, Asp-200, Gly-201, Ala-202, and Asn-229 together coordinate thiamine diphosphate. Residue Asp-200 participates in Mg(2+) binding. The Mg(2+) site is built by Asn-229 and Tyr-231. A thiamine diphosphate-binding site is contributed by His-295.

In terms of assembly, tetramer of 2 alpha and 2 beta subunits. Requires thiamine diphosphate as cofactor. Mg(2+) is required as a cofactor.

It localises to the mitochondrion matrix. It catalyses the reaction N(6)-[(R)-lipoyl]-L-lysyl-[protein] + pyruvate + H(+) = N(6)-[(R)-S(8)-acetyldihydrolipoyl]-L-lysyl-[protein] + CO2. Its activity is regulated as follows. E1 activity is regulated by phosphorylation (inactivation) and dephosphorylation (activation) of the alpha subunit. Its function is as follows. The pyruvate dehydrogenase complex catalyzes the overall conversion of pyruvate to acetyl-CoA and CO(2). It contains multiple copies of three enzymatic components: pyruvate dehydrogenase (E1), dihydrolipoamide acetyltransferase (E2) and lipoamide dehydrogenase (E3). In Arabidopsis thaliana (Mouse-ear cress), this protein is Pyruvate dehydrogenase E1 component subunit alpha-2, mitochondrial (IAR4).